Here is a 303-residue protein sequence, read N- to C-terminus: UDP-N-acetylenolpyruvoylglucosamine reductase (303 aa).

An FAD-binding PCMH-type domain is found at 29 to 196; the sequence is KIGGPADILI…LEAVLQLEQK (168 aa). Arginine 174 is an active-site residue. Serine 225 acts as the Proton donor in catalysis. Glutamate 295 is a catalytic residue.

This sequence belongs to the MurB family. FAD is required as a cofactor.

It is found in the cytoplasm. The enzyme catalyses UDP-N-acetyl-alpha-D-muramate + NADP(+) = UDP-N-acetyl-3-O-(1-carboxyvinyl)-alpha-D-glucosamine + NADPH + H(+). It participates in cell wall biogenesis; peptidoglycan biosynthesis. Its function is as follows. Cell wall formation. This chain is UDP-N-acetylenolpyruvoylglucosamine reductase, found in Bacillus velezensis (strain DSM 23117 / BGSC 10A6 / LMG 26770 / FZB42) (Bacillus amyloliquefaciens subsp. plantarum).